The following is a 91-amino-acid chain: Gem-associated protein 7 homolog (91 aa).

The Sm domain occupies 18-86 (LKFYQKMASA…VVGIEYNLVQ (69 aa)).

The protein belongs to the gemin-7 family. In terms of assembly, part of the core SMN complex at least composed of smn1, yip11/gem2, gem6, gem7 and gem8. Interacts with gem6; the interaction is direct. Interacts with gem8; the interaction is direct.

This is Gem-associated protein 7 homolog from Schizosaccharomyces pombe (strain 972 / ATCC 24843) (Fission yeast).